The primary structure comprises 829 residues: Sodium/hydrogen exchanger 3 (829 aa).

The first 26 residues, 1–26, serve as a signal peptide directing secretion; sequence MWHRALGPGWKLLLALALTSLQGARG. Topologically, residues 27–46 are extracellular; it reads AEEEPSSDGSFQVVTFKWHH. The chain crosses the membrane as a helical span at residues 47–69; it reads VQDPYIIALWILVASLAKIVFHL. Residues 70 to 77 lie on the Cytoplasmic side of the membrane; it reads SHKVTSIV. The helical transmembrane segment at 78 to 97 threads the bilayer; the sequence is PESALLIVLGLVLGGIVWAA. Over 98 to 106 the chain is Extracellular; sequence DHIASFTLT. Residues 107–124 traverse the membrane as a helical segment; it reads PTLFFFYLLPPIVLDAGY. Residues 125-127 are Cytoplasmic-facing; that stretch reads FMP. A helical transmembrane segment spans residues 128–163; it reads NRLFFGNLGTILLYAVIGTIWNAATTGLSLYGVFLS. Positions 133, 136, and 137 each coordinate a 1,2-diacyl-sn-glycero-3-phospho-(1D-myo-inositol). Over 164 to 176 the chain is Extracellular; sequence GLMGELKIGLLDF. Residues 177 to 198 form a helical membrane-spanning segment; the sequence is LLFGSLIAAVDPVAVLAVFEEV. The Cytoplasmic portion of the chain corresponds to 199-200; it reads HV. A helical membrane pass occupies residues 201–232; sequence NEVLFIIVFGESLLNDAVTVVLYNVFESFVTL. Residues 233–239 lie on the Extracellular side of the membrane; the sequence is GGDAVTG. The helical transmembrane segment at 240 to 274 threads the bilayer; sequence VDCVKGIVSFFVVSLGGTLVGVIFAFLLSLVTRFT. Topologically, residues 275-276 are cytoplasmic; sequence KH. The helical transmembrane segment at 277–299 threads the bilayer; it reads VRIIEPGFVFVISYLSYLTSEML. At 300 to 301 the chain is on the extracellular side; that stretch reads SL. Residues 302–318 form a helical membrane-spanning segment; the sequence is SSILAITFCGICCQKYV. The Cytoplasmic segment spans residues 319–325; sequence KANISEQ. Residues 326 to 354 traverse the membrane as a helical segment; it reads SATTVRYTMKMLASGAETIIFMFLGISAV. The Extracellular portion of the chain corresponds to 355–362; the sequence is NPDIWTWN. Residues 363–384 traverse the membrane as a helical segment; the sequence is TAFVLLTLVFISVYRAIGVVLQ. Residues 385–397 are Cytoplasmic-facing; it reads TWILNRYRMVQLE. Methionine 393 is an a 1,2-diacyl-sn-glycero-3-phospho-(1D-myo-inositol) binding site. The helical transmembrane segment at 398 to 421 threads the bilayer; the sequence is TIDQVVMSYGGLRGAVAYALVVLL. Over 422 to 428 the chain is Extracellular; it reads DEKKVKE. A helical transmembrane segment spans residues 429–462; it reads KNLFVSTTLIVVFFTVIFQGLTIKPLVQWLKVKR. Over 463–829 the chain is Cytoplasmic; sequence SEHREPKLNE…QPAAPESTHM (367 aa). Positions 492, 493, and 495 each coordinate a 1,2-diacyl-sn-glycero-3-phospho-(1D-myo-inositol). Serine 550 and serine 558 each carry phosphoserine. The interval 571–585 is interaction with EZR; that stretch reads RPSTVEASVSYFLRE. An interaction with NHERF4 region spans residues 586–663; that stretch reads NVSAVCLDMQ…RKRLESFKSA (78 aa). Residues 587-691 are interaction with AHCYL1; the sequence is VSAVCLDMQS…AQKRRNSSIP (105 aa). A phosphoserine mark is found at serine 588 and serine 603. Phosphoserine; by SGK1 is present on serine 659. The span at 677–687 shows a compositional bias: basic residues; the sequence is YKRERAQKRRN. Positions 677–696 are disordered; it reads YKRERAQKRRNSSIPNGKLP. Phosphoserine occurs at positions 714, 805, and 808.

This sequence belongs to the monovalent cation:proton antiporter 1 (CPA1) transporter (TC 2.A.36) family. As to quaternary structure, homodimer. Found in the forms of complex and dynamic macromolecular complexes. Binds NHERF1 and NHERF2. Interacts with CHP1; this interaction increases trafficking and activity of SLC9A3 at the plasma membrane. Interacts with CHP2 and SHANK2. Interacts with PDZK1 (via C-terminal PDZ domain). Interacts with NHERF4 and interactions decrease in response to elevated calcium ion levels. Interacts with AHCYL1; the interaction is required for SLC9A3 activity. Interacts with EZR; interaction targets SLC9A3 to the apical membrane. Interacts with SNX27 (via PDZ domains); directs SLC9A3 membrane insertion from early endosomes to the plasma membrane. Phosphorylated by PKA, which inhibits activity. Phosphorylation at Ser-659 by SGK1 is associated with increased abundance at the cell membrane. Phosphorylation at Ser-714 by CSNK2A1 regulates SLC9A3 activity through the formation of multiple signaling complexes.

It localises to the apical cell membrane. The protein resides in the cell membrane. It is found in the recycling endosome membrane. Its subcellular location is the early endosome membrane. The enzyme catalyses Na(+)(in) + H(+)(out) = Na(+)(out) + H(+)(in). Seems to switch between active and inactive modes in response to various stimuli. Activated directly or indirectly by membrane phosphatidylinositol (PIs). Regulated by a variety of auxiliary proteins, which facilitate the maturation, cell surface expression and function of the transporter. Inhibited specifically by the drug tenapanor. Its function is as follows. Plasma membrane Na(+)/H(+) antiporter. Exchanges intracellular H(+) ions for extracellular Na(+) in 1:1 stoichiometry, playing a key role in salt and fluid absorption and pH homeostasis. Major apical Na(+)/H(+) exchanger in kidney and intestine playing an important role in renal and intestine Na(+) absorption and blood pressure regulation. The polypeptide is Sodium/hydrogen exchanger 3 (Mus musculus (Mouse)).